The primary structure comprises 318 residues: Glutathione synthetase (318 aa).

In terms of domain architecture, ATP-grasp spans 133–317; it reads KMYALQFTSV…LGQQVMAWLF (185 aa). 159 to 215 is an ATP binding site; the sequence is VQQQGMAVLKPLGGKGGEGILFLQAGDRNLNSMIEISTQRGQLPVMLQEYLPAAKEG. Residues E288 and N290 each contribute to the Mg(2+) site.

It belongs to the prokaryotic GSH synthase family. Mg(2+) serves as cofactor. Requires Mn(2+) as cofactor.

It catalyses the reaction gamma-L-glutamyl-L-cysteine + glycine + ATP = glutathione + ADP + phosphate + H(+). The protein operates within sulfur metabolism; glutathione biosynthesis; glutathione from L-cysteine and L-glutamate: step 2/2. The chain is Glutathione synthetase from Thermosynechococcus vestitus (strain NIES-2133 / IAM M-273 / BP-1).